The primary structure comprises 307 residues: Glutenin, low molecular weight subunit 1D1 (307 aa).

The signal sequence occupies residues 1 to 23; sequence MKTFLVFALLAVAATSAIAQMET. Disordered stretches follow at residues 31–88 and 105–126; these read RPWQ…ILPQ and PFSQ…QQQQ. The span at 43 to 88 shows a compositional bias: low complexity; the sequence is TFPQQPLFSQQQQQQLFPQQPSFSQQQPPFWQQQPPFSQQQPILPQ.

It belongs to the gliadin/glutenin family. Disulfide-bridge linked aggregates. As to expression, expressed in endosperm, but not in husk and leaf tissues.

Glutenins are high-molecular weight seed storage proteins of wheat endosperm. Thought to be responsible for the visco-elastic property of wheat dough. This chain is Glutenin, low molecular weight subunit 1D1, found in Triticum aestivum (Wheat).